The primary structure comprises 341 residues: Oxidoreductase swnN (341 aa).

The protein belongs to the NmrA-type oxidoreductase family. Isoflavone reductase subfamily.

The protein operates within mycotoxin biosynthesis. Its function is as follows. Oxidoreductase; part of the gene cluster that mediates the biosynthesis of swainsonine (SW), a cytotoxic fungal alkaloid and a potential cancer therapy drug. Swainsonine production occurs via a multibranched pathway and is dispensable for fungal colonization of plants and infection of insect hosts. The first step of swainsonine biosynthesis is the production of the precursor pipecolic acid (PA) via conversion of L-lysine (Lys) to 1-piperideine-6-carboxylate (P6C) by the aminotransferase swnA, the latter being further reduced to PA by the reductase swnR. PA can be converted from lysine by both the SW biosynthetic cluster and the unclustered genes such as lysine cyclodeaminase. The PKS-NRPS hybrid synthetase swnK uptakes and condensates PA and malonyl-CoA with and without skipping of the ketoreductase (KR) domain in order to produce 3 intermediates, 1-oxoindolizidine, (1S)-1-hydroxyindolizin, and (1R)-1-hydroxyindolizine; with the transisomer (1S)-1-hydroxyindolizin being predominant. The terminal thioester reductase (TE) domain of swnK is involved in reduction of the thioester bond to release the intermediate aldehydes. The oxidoreductase swnN could contribute to the reduction of 1-oxoindolizidine to (1S)-1-hydroxyindolizin and (1R)-1-hydroxyindolizine, contributing to the major route of SW production. The dioxygenase swnH2 would be responsible for the oxidization of (1R)-1-hydroxyindolizine into (1R,2S)-1,2-dihydroxyindolizine and of (1S)-1-hydroxyindolizin to yield both (1R,2S)-1,2-dihydroxyindolizine and (1S,2S)-1,2-dihydroxyindolizine. The dioxygenase swnH1 then performs the conversion of the 1,2-dihydroxyindolizine epimers to SW. The protein is Oxidoreductase swnN of Metarhizium robertsii (strain ARSEF 23 / ATCC MYA-3075) (Metarhizium anisopliae (strain ARSEF 23)).